A 229-amino-acid chain; its full sequence is MSGFTDRIIASMAGGLVVSCQAYPGEPLRHPETMAQMAAAVEAGGAVAVRAQGLSDVSAVKGRVSVPVVGIWKEGDEGIYITPTLRHARCVSAAGADVVALDGTRRERADGLSLAETIERLKREYDVVVMADCGSVDDGLFAAEAGADLIGTTLCGYTGERPKTDGPDYEVIEALVKKLDGDRPVIAEGRIHTPDQARRAMDLGAHAVVVGTAITHPTSITGWFRDALR.

It belongs to the NanE family.

It catalyses the reaction an N-acyl-D-glucosamine 6-phosphate = an N-acyl-D-mannosamine 6-phosphate. The protein operates within amino-sugar metabolism; N-acetylneuraminate degradation; D-fructose 6-phosphate from N-acetylneuraminate: step 3/5. Its function is as follows. Converts N-acetylmannosamine-6-phosphate (ManNAc-6-P) to N-acetylglucosamine-6-phosphate (GlcNAc-6-P). This Cutibacterium acnes (strain DSM 16379 / KPA171202) (Propionibacterium acnes) protein is Putative N-acetylmannosamine-6-phosphate 2-epimerase.